Consider the following 477-residue polypeptide: Ribulose bisphosphate carboxylase large chain (477 aa).

Positions 1–2 (MS) are excised as a propeptide. Position 3 is an N-acetylproline (Pro3). Residues Asn123 and Thr173 each contribute to the substrate site. Lys175 acts as the Proton acceptor in catalysis. Residue Lys177 participates in substrate binding. Residues Lys201, Asp203, and Glu204 each coordinate Mg(2+). At Lys201 the chain carries N6-carboxylysine. His294 functions as the Proton acceptor in the catalytic mechanism. Arg295, His327, and Ser379 together coordinate substrate.

The protein belongs to the RuBisCO large chain family. Type I subfamily. As to quaternary structure, heterohexadecamer of 8 large chains and 8 small chains; disulfide-linked. The disulfide link is formed within the large subunit homodimers. Mg(2+) is required as a cofactor. The disulfide bond which can form between Cys-247 in the large chain dimeric partners within the hexadecamer appears to be associated with oxidative stress and protein turnover.

The protein resides in the plastid. It is found in the chloroplast. It carries out the reaction 2 (2R)-3-phosphoglycerate + 2 H(+) = D-ribulose 1,5-bisphosphate + CO2 + H2O. The enzyme catalyses D-ribulose 1,5-bisphosphate + O2 = 2-phosphoglycolate + (2R)-3-phosphoglycerate + 2 H(+). Functionally, ruBisCO catalyzes two reactions: the carboxylation of D-ribulose 1,5-bisphosphate, the primary event in carbon dioxide fixation, as well as the oxidative fragmentation of the pentose substrate in the photorespiration process. Both reactions occur simultaneously and in competition at the same active site. The protein is Ribulose bisphosphate carboxylase large chain (rbcL) of Triticum aestivum (Wheat).